Consider the following 46-residue polypeptide: Antimicrobial peptide eNAP-1 (46 aa).

2 disulfides stabilise this stretch: cysteine 4-cysteine 16 and cysteine 10-cysteine 26.

The protein belongs to the granulin family.

It is found in the secreted. In terms of biological role, has antimicrobial activity against Gram-negative and Gram-positive bacteria. The chain is Antimicrobial peptide eNAP-1 from Equus caballus (Horse).